A 134-amino-acid chain; its full sequence is S-protein homolog 31 (134 aa).

Positions M1–G21 are cleaved as a signal peptide. The N-linked (GlcNAc...) asparagine glycan is linked to N87.

The protein belongs to the plant self-incompatibility (S1) protein family.

The protein resides in the secreted. In Arabidopsis thaliana (Mouse-ear cress), this protein is S-protein homolog 31.